Consider the following 478-residue polypeptide: Light-independent protochlorophyllide reductase subunit N (478 aa).

[4Fe-4S] cluster is bound by residues C22, C47, and C107.

It belongs to the BchN/ChlN family. As to quaternary structure, protochlorophyllide reductase is composed of three subunits; ChlL, ChlN and ChlB. Forms a heterotetramer of two ChlB and two ChlN subunits. It depends on [4Fe-4S] cluster as a cofactor.

Its subcellular location is the plastid. The protein localises to the chloroplast. It catalyses the reaction chlorophyllide a + oxidized 2[4Fe-4S]-[ferredoxin] + 2 ADP + 2 phosphate = protochlorophyllide a + reduced 2[4Fe-4S]-[ferredoxin] + 2 ATP + 2 H2O. The protein operates within porphyrin-containing compound metabolism; chlorophyll biosynthesis (light-independent). Component of the dark-operative protochlorophyllide reductase (DPOR) that uses Mg-ATP and reduced ferredoxin to reduce ring D of protochlorophyllide (Pchlide) to form chlorophyllide a (Chlide). This reaction is light-independent. The NB-protein (ChlN-ChlB) is the catalytic component of the complex. This chain is Light-independent protochlorophyllide reductase subunit N, found in Chlorokybus atmophyticus (Soil alga).